A 243-amino-acid polypeptide reads, in one-letter code: Pyridoxine 5'-phosphate synthase (243 aa).

A 3-amino-2-oxopropyl phosphate-binding site is contributed by N6. A 1-deoxy-D-xylulose 5-phosphate-binding site is contributed by 8–9 (DH). Residue R17 coordinates 3-amino-2-oxopropyl phosphate. Catalysis depends on H42, which acts as the Proton acceptor. 1-deoxy-D-xylulose 5-phosphate is bound by residues R44 and H49. The active-site Proton acceptor is the E72. T102 is a binding site for 1-deoxy-D-xylulose 5-phosphate. Catalysis depends on H192, which acts as the Proton donor. Residues G193 and 214–215 (GH) each bind 3-amino-2-oxopropyl phosphate.

Belongs to the PNP synthase family. In terms of assembly, homooctamer; tetramer of dimers.

The protein localises to the cytoplasm. It catalyses the reaction 3-amino-2-oxopropyl phosphate + 1-deoxy-D-xylulose 5-phosphate = pyridoxine 5'-phosphate + phosphate + 2 H2O + H(+). The protein operates within cofactor biosynthesis; pyridoxine 5'-phosphate biosynthesis; pyridoxine 5'-phosphate from D-erythrose 4-phosphate: step 5/5. Catalyzes the complicated ring closure reaction between the two acyclic compounds 1-deoxy-D-xylulose-5-phosphate (DXP) and 3-amino-2-oxopropyl phosphate (1-amino-acetone-3-phosphate or AAP) to form pyridoxine 5'-phosphate (PNP) and inorganic phosphate. The sequence is that of Pyridoxine 5'-phosphate synthase from Sulfurihydrogenibium sp. (strain YO3AOP1).